The following is a 111-amino-acid chain: uncharacterized protein (111 aa).

The next 3 membrane-spanning stretches (helical) occupy residues 22–42, 48–68, and 75–95; these read ASLI…ANIT, LTPA…VSVL, and VLVT…PKIL.

It localises to the membrane. This is an uncharacterized protein from Saccharomyces cerevisiae (strain ATCC 204508 / S288c) (Baker's yeast).